An 86-amino-acid polypeptide reads, in one-letter code: Small ribosomal subunit protein bS16 (86 aa).

This sequence belongs to the bacterial ribosomal protein bS16 family.

The protein is Small ribosomal subunit protein bS16 of Nostoc punctiforme (strain ATCC 29133 / PCC 73102).